Reading from the N-terminus, the 357-residue chain is tRNA-specific 2-thiouridylase MnmA (357 aa).

Residues 7–14 (AMSGGVDS) and Met33 each bind ATP. Cys101 functions as the Nucleophile in the catalytic mechanism. Cysteines 101 and 198 form a disulfide. Gly125 contributes to the ATP binding site. Residues 148–150 (KDQ) are interaction with tRNA. The active-site Cysteine persulfide intermediate is the Cys198.

Belongs to the MnmA/TRMU family.

Its subcellular location is the cytoplasm. The enzyme catalyses S-sulfanyl-L-cysteinyl-[protein] + uridine(34) in tRNA + AH2 + ATP = 2-thiouridine(34) in tRNA + L-cysteinyl-[protein] + A + AMP + diphosphate + H(+). In terms of biological role, catalyzes the 2-thiolation of uridine at the wobble position (U34) of tRNA, leading to the formation of s(2)U34. The chain is tRNA-specific 2-thiouridylase MnmA from Herpetosiphon aurantiacus (strain ATCC 23779 / DSM 785 / 114-95).